The following is a 292-amino-acid chain: Cytochrome c1, heme protein, mitochondrial (292 aa).

The transit peptide at 1–46 (MFRSFSTAAKQAVKGTYVQRAIVGGAAVVGIGASTMLYADSLTADA) directs the protein to the mitochondrion. Residues 47–253 (MTAAEHGLHA…SEPEHDERKR (207 aa)) are Mitochondrial intermembrane-facing. The 154-residue stretch at 73–226 (SSIRRGYQVY…DLVEYEDGTP (154 aa)) folds into the Cytochrome c domain. Heme c-binding residues include C86, C89, and H90. The interval 117–137 (FEYDDEPDDQGNPKKRPGKLA) is disordered. M210 lines the heme c pocket. A helical membrane pass occupies residues 254 to 272 (LGLKAMIVLSSLYLLSVWV). The Mitochondrial matrix portion of the chain corresponds to 273–292 (KKFKWASIKSRKIVFNPPKK).

It belongs to the cytochrome c family. As to quaternary structure, component of the ubiquinol-cytochrome c oxidoreductase (cytochrome b-c1 complex, complex III, CIII), a multisubunit enzyme composed of 3 respiratory subunits cytochrome b, cytochrome c1 and Rieske protein, 2 core protein subunits, and additional low-molecular weight protein subunits. The complex exists as an obligatory dimer and forms supercomplexes (SCs) in the inner mitochondrial membrane with cytochrome c oxidase (complex IV, CIV). Requires heme c as cofactor.

It is found in the mitochondrion inner membrane. The catalysed reaction is a quinol + 2 Fe(III)-[cytochrome c](out) = a quinone + 2 Fe(II)-[cytochrome c](out) + 2 H(+)(out). Component of the ubiquinol-cytochrome c oxidoreductase, a multisubunit transmembrane complex that is part of the mitochondrial electron transport chain which drives oxidative phosphorylation. The respiratory chain contains 3 multisubunit complexes succinate dehydrogenase (complex II, CII), ubiquinol-cytochrome c oxidoreductase (cytochrome b-c1 complex, complex III, CIII) and cytochrome c oxidase (complex IV, CIV), that cooperate to transfer electrons derived from NADH and succinate to molecular oxygen, creating an electrochemical gradient over the inner membrane that drives transmembrane transport and the ATP synthase. The cytochrome b-c1 complex catalyzes electron transfer from ubiquinol to cytochrome c, linking this redox reaction to translocation of protons across the mitochondrial inner membrane, with protons being carried across the membrane as hydrogens on the quinol. In the process called Q cycle, 2 protons are consumed from the matrix, 4 protons are released into the intermembrane space and 2 electrons are passed to cytochrome c. Cytochrome c1 is a catalytic core subunit containing a c-type heme. It transfers electrons from the [2Fe-2S] iron-sulfur cluster of the Rieske protein to cytochrome c. This is Cytochrome c1, heme protein, mitochondrial (CYT1) from Kluyveromyces lactis (strain ATCC 8585 / CBS 2359 / DSM 70799 / NBRC 1267 / NRRL Y-1140 / WM37) (Yeast).